Reading from the N-terminus, the 95-residue chain is Large ribosomal subunit protein bL27 (95 aa).

Residues 1-25 (MAHKKGTGSTRNGRDSNAQRLGVKR) form a disordered region. Over residues 7–19 (TGSTRNGRDSNAQ) the composition is skewed to polar residues.

This sequence belongs to the bacterial ribosomal protein bL27 family.

The protein is Large ribosomal subunit protein bL27 of Gloeobacter violaceus (strain ATCC 29082 / PCC 7421).